The following is a 150-amino-acid chain: MQVLVDADACPAVIKDMLFRAARRAEICVTLVANQFLRTPPSPFIKSVQVPAGFDVADARIVELAQAGDLVITADIPLAAAVLDKGAHALDPRGNWFSRENIEERLSTRAMMDQLRSSGVDTGGPAPFSARDGKAFASQLDRFLARHGKP.

It belongs to the UPF0178 family.

The polypeptide is UPF0178 protein BamMC406_1579 (Burkholderia ambifaria (strain MC40-6)).